A 599-amino-acid chain; its full sequence is Afamin (599 aa).

The N-terminal stretch at 1-21 (MKLLKLTGFIFFLFFLTESLT) is a signal peptide. 3 Albumin domains span residues 22–210 (LPTQ…IPVT), 211–403 (QYLK…KFNE), and 404–599 (TTEK…KIGN). N-linked (GlcNAc...) (complex) asparagine glycosylation is present at N33. 11 cysteine pairs are disulfide-bonded: C77–C86, C99–C114, C113–C124, C148–C193, C192–C201, C224–C270, C269–C277, C289–C303, C302–C313, C340–C385, and C384–C393. The N-linked (GlcNAc...) (complex) asparagine glycan is linked to N109. The tract at residues 215–319 (AFSSYQKHVC…RGQCIINSNK (105 aa)) is binding pocket for hydrophobic ligands. Residue N383 is glycosylated (N-linked (GlcNAc...) (complex) asparagine; atypical). N402 carries N-linked (GlcNAc...) (complex) asparagine glycosylation. 6 cysteine pairs are disulfide-bonded: C416/C462, C461/C470, C483/C499, C498/C509, C536/C581, and C580/C589. N488 carries an N-linked (GlcNAc...) asparagine glycan.

The protein belongs to the ALB/AFP/VDB family. As to quaternary structure, forms a 1:1 complex with Wnt family members; interacts with WNT1, WNT2B, WNT3, WNT3A, WNT5A, WNT7A, WNT7B, WNT8, WNT9A, WNT9B, WNT10A and WNT10B. Post-translationally, N-glycosylated; more than 90% of the glycans are sialylated. As to expression, high level detected in plasma but also in extravascular fluids such as follicular and cerebrospinal fluids (at protein level).

Its subcellular location is the secreted. Its function is as follows. Functions as a carrier for hydrophobic molecules in body fluids. Essential for the solubility and activity of lipidated Wnt family members, including WNT1, WNT2B, WNT3, WNT3A, WNT5A, WNT7A, WNT7B, WNT8, WNT9A, WNT9B, WNT10A and WNT10B. Binds vitamin E. May transport vitamin E in body fluids under conditions where the lipoprotein system is not sufficient. May be involved in the transport of vitamin E across the blood-brain barrier. This Homo sapiens (Human) protein is Afamin (AFM).